Reading from the N-terminus, the 58-residue chain is Large ribosomal subunit protein uL30 (58 aa).

It belongs to the universal ribosomal protein uL30 family. As to quaternary structure, part of the 50S ribosomal subunit.

The chain is Large ribosomal subunit protein uL30 from Novosphingobium aromaticivorans (strain ATCC 700278 / DSM 12444 / CCUG 56034 / CIP 105152 / NBRC 16084 / F199).